A 278-amino-acid polypeptide reads, in one-letter code: Mediator of RNA polymerase II transcription subunit 18 (278 aa).

Belongs to the Mediator complex subunit 18 family. In terms of assembly, component of the Mediator complex.

Its subcellular location is the nucleus. Its function is as follows. Component of the Mediator complex, a coactivator involved in the regulated transcription of nearly all RNA polymerase II-dependent genes. Mediator functions as a bridge to convey information from gene-specific regulatory proteins to the basal RNA polymerase II transcription machinery. Mediator is recruited to promoters by direct interactions with regulatory proteins and serves as a scaffold for the assembly of a functional preinitiation complex with RNA polymerase II and the general transcription factors. This is Mediator of RNA polymerase II transcription subunit 18 (srb5) from Aspergillus clavatus (strain ATCC 1007 / CBS 513.65 / DSM 816 / NCTC 3887 / NRRL 1 / QM 1276 / 107).